Consider the following 98-residue polypeptide: Large ribosomal subunit protein bL25 (98 aa).

The disordered stretch occupies residues 1–23; the sequence is MANFVLNAQARAEDKQGKGASRR.

This sequence belongs to the bacterial ribosomal protein bL25 family. In terms of assembly, part of the 50S ribosomal subunit; part of the 5S rRNA/L5/L18/L25 subcomplex. Contacts the 5S rRNA. Binds to the 5S rRNA independently of L5 and L18.

In terms of biological role, this is one of the proteins that binds to the 5S RNA in the ribosome where it forms part of the central protuberance. This is Large ribosomal subunit protein bL25 from Acinetobacter baumannii (strain AB307-0294).